Consider the following 335-residue polypeptide: [Citrate [pro-3S]-lyase] ligase (335 aa).

In terms of domain architecture, N-acetyltransferase spans 1-131 (MQFERISTEQ…SATRLQKQCS (131 aa)).

It catalyses the reaction holo-[citrate lyase ACP] + acetate + ATP = acetyl-[citrate lyase ACP] + AMP + diphosphate. Its function is as follows. Acetylation of prosthetic group (2-(5''-phosphoribosyl)-3'-dephosphocoenzyme-A) of the gamma subunit of citrate lyase. In Haemophilus influenzae (strain ATCC 51907 / DSM 11121 / KW20 / Rd), this protein is [Citrate [pro-3S]-lyase] ligase (citC).